Consider the following 401-residue polypeptide: NALCN channel auxiliary factor 2 (401 aa).

Residues 42–62 (LASLLFFTALLSDHLWLCAGG) traverse the membrane as a helical segment. 4 N-linked (GlcNAc...) asparagine glycosylation sites follow: Asn77, Asn97, Asn153, and Asn178. A helical membrane pass occupies residues 362-382 (LCVLVLFLLHTFISITTLQHC).

It belongs to the NALF family.

The protein localises to the membrane. Its function is as follows. Probable component of the NALCN channel complex, a channel that regulates the resting membrane potential and controls neuronal excitability. In Danio rerio (Zebrafish), this protein is NALCN channel auxiliary factor 2 (nalf2).